The following is a 219-amino-acid chain: Large ribosomal subunit protein uL1 (219 aa).

It belongs to the universal ribosomal protein uL1 family. Part of the 50S ribosomal subunit.

Binds directly to 23S rRNA. Probably involved in E site tRNA release. Functionally, protein L1 is also a translational repressor protein, it controls the translation of its operon by binding to its mRNA. This is Large ribosomal subunit protein uL1 from Pyrococcus horikoshii (strain ATCC 700860 / DSM 12428 / JCM 9974 / NBRC 100139 / OT-3).